Consider the following 135-residue polypeptide: S-adenosylmethionine decarboxylase proenzyme (135 aa).

Ser64 acts as the Schiff-base intermediate with substrate; via pyruvic acid in catalysis. Pyruvic acid (Ser); by autocatalysis is present on Ser64. His69 functions as the Proton acceptor; for processing activity in the catalytic mechanism. Cys84 serves as the catalytic Proton donor; for catalytic activity.

Belongs to the prokaryotic AdoMetDC family. Type 1 subfamily. As to quaternary structure, heterotetramer of two alpha and two beta chains arranged as a dimer of alpha/beta heterodimers. Pyruvate is required as a cofactor. In terms of processing, is synthesized initially as an inactive proenzyme. Formation of the active enzyme involves a self-maturation process in which the active site pyruvoyl group is generated from an internal serine residue via an autocatalytic post-translational modification. Two non-identical subunits are generated from the proenzyme in this reaction, and the pyruvate is formed at the N-terminus of the alpha chain, which is derived from the carboxyl end of the proenzyme. The post-translation cleavage follows an unusual pathway, termed non-hydrolytic serinolysis, in which the side chain hydroxyl group of the serine supplies its oxygen atom to form the C-terminus of the beta chain, while the remainder of the serine residue undergoes an oxidative deamination to produce ammonia and the pyruvoyl group blocking the N-terminus of the alpha chain.

The enzyme catalyses S-adenosyl-L-methionine + H(+) = S-adenosyl 3-(methylsulfanyl)propylamine + CO2. It participates in amine and polyamine biosynthesis; S-adenosylmethioninamine biosynthesis; S-adenosylmethioninamine from S-adenosyl-L-methionine: step 1/1. Its function is as follows. Catalyzes the decarboxylation of S-adenosylmethionine to S-adenosylmethioninamine (dcAdoMet), the propylamine donor required for the synthesis of the polyamines spermine and spermidine from the diamine putrescine. This Aquifex aeolicus (strain VF5) protein is S-adenosylmethionine decarboxylase proenzyme.